Consider the following 416-residue polypeptide: F-box/FBD/LRR-repeat protein At1g13570 (416 aa).

One can recognise an F-box domain in the interval 5–53 (PDFISDLPQSIIENILTRLSIRDAIRTSVLSSKWRYKWSTLTDLVFDEK). 5 LRR repeats span residues 115–142 (VLKL…ELCH), 164–189 (QILV…SLSY), 203–229 (MYLY…SVSM), 238–263 (FEQS…VGYI), and 294–321 (CFED…KVSA). An FBD domain is found at 346-384 (LPSLESVKITDASGIRYELEFIRFLLGTSPVLETVTVSS).

In Arabidopsis thaliana (Mouse-ear cress), this protein is F-box/FBD/LRR-repeat protein At1g13570.